A 378-amino-acid chain; its full sequence is Anhydro-N-acetylmuramic acid kinase (378 aa).

Residue Gly-23 to Asp-30 coordinates ATP.

Belongs to the anhydro-N-acetylmuramic acid kinase family.

The catalysed reaction is 1,6-anhydro-N-acetyl-beta-muramate + ATP + H2O = N-acetyl-D-muramate 6-phosphate + ADP + H(+). Its pathway is amino-sugar metabolism; 1,6-anhydro-N-acetylmuramate degradation. It functions in the pathway cell wall biogenesis; peptidoglycan recycling. Its function is as follows. Catalyzes the specific phosphorylation of 1,6-anhydro-N-acetylmuramic acid (anhMurNAc) with the simultaneous cleavage of the 1,6-anhydro ring, generating MurNAc-6-P. Is required for the utilization of anhMurNAc either imported from the medium or derived from its own cell wall murein, and thus plays a role in cell wall recycling. In Bordetella pertussis (strain Tohama I / ATCC BAA-589 / NCTC 13251), this protein is Anhydro-N-acetylmuramic acid kinase.